Reading from the N-terminus, the 868-residue chain is uncharacterized protein (868 aa).

The protein localises to the cytoplasm. It is found in the nucleus. This is an uncharacterized protein from Schizosaccharomyces pombe (strain 972 / ATCC 24843) (Fission yeast).